We begin with the raw amino-acid sequence, 139 residues long: Holo-[acyl-carrier-protein] synthase (139 aa).

Residues aspartate 9 and glutamate 63 each coordinate Mg(2+).

It belongs to the P-Pant transferase superfamily. AcpS family. Mg(2+) is required as a cofactor.

The protein resides in the cytoplasm. The catalysed reaction is apo-[ACP] + CoA = holo-[ACP] + adenosine 3',5'-bisphosphate + H(+). Its function is as follows. Transfers the 4'-phosphopantetheine moiety from coenzyme A to a Ser of acyl-carrier-protein. This chain is Holo-[acyl-carrier-protein] synthase, found in Wigglesworthia glossinidia brevipalpis.